Here is a 514-residue protein sequence, read N- to C-terminus: 2,3-bisphosphoglycerate-independent phosphoglycerate mutase (514 aa).

Positions 14 and 64 each coordinate Mn(2+). Ser-64 serves as the catalytic Phosphoserine intermediate. Substrate-binding positions include His-125, 155–156 (RD), Arg-187, Arg-193, 263–266 (RADR), and Lys-337. Mn(2+) is bound by residues Asp-404, His-408, Asp-445, His-446, and His-464.

It belongs to the BPG-independent phosphoglycerate mutase family. As to quaternary structure, monomer. It depends on Mn(2+) as a cofactor.

It catalyses the reaction (2R)-2-phosphoglycerate = (2R)-3-phosphoglycerate. It functions in the pathway carbohydrate degradation; glycolysis; pyruvate from D-glyceraldehyde 3-phosphate: step 3/5. Functionally, catalyzes the interconversion of 2-phosphoglycerate and 3-phosphoglycerate. In Serratia proteamaculans (strain 568), this protein is 2,3-bisphosphoglycerate-independent phosphoglycerate mutase.